The primary structure comprises 406 residues: Bifunctional enzyme IspD/IspF (406 aa).

Residues 1 to 247 (MSLIRVNGEA…ALFFNPAKDT (247 aa)) are 2-C-methyl-D-erythritol 4-phosphate cytidylyltransferase. Positions 248-406 (FIGMGFDTHA…HVSMRYKQKL (159 aa)) are 2-C-methyl-D-erythritol 2,4-cyclodiphosphate synthase. The a divalent metal cation site is built by Asp-254 and His-256. Residues 254-256 (DTH) and 280-281 (HS) each bind 4-CDP-2-C-methyl-D-erythritol 2-phosphate. His-288 provides a ligand contact to a divalent metal cation. 4-CDP-2-C-methyl-D-erythritol 2-phosphate is bound by residues 302-304 (DIG), 307-311 (FPDND), 378-381 (TTME), Phe-385, and Lys-388.

This sequence in the N-terminal section; belongs to the IspD/TarI cytidylyltransferase family. IspD subfamily. In the C-terminal section; belongs to the IspF family. It depends on a divalent metal cation as a cofactor.

It carries out the reaction 2-C-methyl-D-erythritol 4-phosphate + CTP + H(+) = 4-CDP-2-C-methyl-D-erythritol + diphosphate. The catalysed reaction is 4-CDP-2-C-methyl-D-erythritol 2-phosphate = 2-C-methyl-D-erythritol 2,4-cyclic diphosphate + CMP. The protein operates within isoprenoid biosynthesis; isopentenyl diphosphate biosynthesis via DXP pathway; isopentenyl diphosphate from 1-deoxy-D-xylulose 5-phosphate: step 2/6. It functions in the pathway isoprenoid biosynthesis; isopentenyl diphosphate biosynthesis via DXP pathway; isopentenyl diphosphate from 1-deoxy-D-xylulose 5-phosphate: step 4/6. In terms of biological role, bifunctional enzyme that catalyzes the formation of 4-diphosphocytidyl-2-C-methyl-D-erythritol from CTP and 2-C-methyl-D-erythritol 4-phosphate (MEP) (IspD), and catalyzes the conversion of 4-diphosphocytidyl-2-C-methyl-D-erythritol 2-phosphate (CDP-ME2P) to 2-C-methyl-D-erythritol 2,4-cyclodiphosphate (ME-CPP) with a corresponding release of cytidine 5-monophosphate (CMP) (IspF). The chain is Bifunctional enzyme IspD/IspF from Helicobacter pylori (strain Shi470).